We begin with the raw amino-acid sequence, 420 residues long: MKAEVIAVGSELLLGQIANTNGQFLSQQLAKAGVDVFYHSVVGDNATRLQETLEIASERSELIILTGGLGPTKDDLTKEVVASFLHKELVIDEVALEQIVSFFEKRNLPMTENNRKQALVLKEATIFQNHYGMAPGMATIHQGVTYVLLPGPPREMRPMVTEQVIPFLSSHVGDLQIISRVLRFFGIGESKLETELEDLIDGQSNPTIAPLASEGEVTLRLTVKHHDETQAALLLDETERKIRERVGHYFYGYDETSLMEKLVSCLTKTGLSLASAESLTGGLFGARITNIPGASACFLAAITTYTNDMKQSWLNVPPHVLEQHGAVSPECAIAMAQGVKKLTKADVTISFTGVAGPSPSEGKEPGTVFIGLCFRDDEPEAITLQLSGSREQIRERTLKHGCQQILNRIKRWNERSNDKV.

The protein belongs to the CinA family.

This is Putative competence-damage inducible protein from Halalkalibacterium halodurans (strain ATCC BAA-125 / DSM 18197 / FERM 7344 / JCM 9153 / C-125) (Bacillus halodurans).